We begin with the raw amino-acid sequence, 768 residues long: Probable beta-glucosidase M (768 aa).

Positions 1–19 (MHAIAGLTGLLAGVSLSYA) are cleaved as a signal peptide. Asn25, Asn72, and Asn259 each carry an N-linked (GlcNAc...) asparagine glycan. Asp287 is an active-site residue. N-linked (GlcNAc...) asparagine glycans are attached at residues Asn315, Asn322, Asn394, Asn434, Asn472, Asn543, and Asn651.

Belongs to the glycosyl hydrolase 3 family.

It is found in the secreted. It carries out the reaction Hydrolysis of terminal, non-reducing beta-D-glucosyl residues with release of beta-D-glucose.. It functions in the pathway glycan metabolism; cellulose degradation. Beta-glucosidases are one of a number of cellulolytic enzymes involved in the degradation of cellulosic biomass. Catalyzes the last step releasing glucose from the inhibitory cellobiose. The protein is Probable beta-glucosidase M (bglM) of Aspergillus oryzae (strain ATCC 42149 / RIB 40) (Yellow koji mold).